The primary structure comprises 171 residues: Large ribosomal subunit protein bL9 (171 aa).

It belongs to the bacterial ribosomal protein bL9 family.

Functionally, binds to the 23S rRNA. This chain is Large ribosomal subunit protein bL9, found in Orientia tsutsugamushi (strain Ikeda) (Rickettsia tsutsugamushi).